A 252-amino-acid polypeptide reads, in one-letter code: 2-succinyl-6-hydroxy-2,4-cyclohexadiene-1-carboxylate synthase (252 aa).

It belongs to the AB hydrolase superfamily. MenH family. As to quaternary structure, monomer.

The catalysed reaction is 5-enolpyruvoyl-6-hydroxy-2-succinyl-cyclohex-3-ene-1-carboxylate = (1R,6R)-6-hydroxy-2-succinyl-cyclohexa-2,4-diene-1-carboxylate + pyruvate. The protein operates within quinol/quinone metabolism; 1,4-dihydroxy-2-naphthoate biosynthesis; 1,4-dihydroxy-2-naphthoate from chorismate: step 3/7. Its pathway is quinol/quinone metabolism; menaquinone biosynthesis. Functionally, catalyzes a proton abstraction reaction that results in 2,5-elimination of pyruvate from 2-succinyl-5-enolpyruvyl-6-hydroxy-3-cyclohexene-1-carboxylate (SEPHCHC) and the formation of 2-succinyl-6-hydroxy-2,4-cyclohexadiene-1-carboxylate (SHCHC). The protein is 2-succinyl-6-hydroxy-2,4-cyclohexadiene-1-carboxylate synthase of Escherichia coli O7:K1 (strain IAI39 / ExPEC).